The primary structure comprises 362 residues: Protein mom-2 (362 aa).

A signal peptide spans 1–24 (MHINTPVLLAIIYFLVFAPKSADA). Disulfide bonds link Cys80-Cys91, Cys129-Cys137, Cys139-Cys167, Cys217-Cys231, and Cys219-Cys226. The N-linked (GlcNAc...) asparagine glycan is linked to Asn90. Ser223 is lipidated: O-palmitoleoyl serine; by mom-1. Positions 263–282 (TVRSSPSAGSSGRSERFARN) are disordered. Low complexity predominate over residues 265–274 (RSSPSAGSSG). 6 disulfide bridges follow: Cys304-Cys322, Cys313-Cys317, Cys321-Cys361, Cys337-Cys352, Cys339-Cys349, and Cys344-Cys345.

This sequence belongs to the Wnt family. Post-translationally, palmitoleoylation is required for efficient binding to frizzled receptors. Depalmitoleoylation leads to Wnt signaling pathway inhibition. Expressed by anchor cell and vulva precursor cell descendants P5.ppa, P5.ppp, P7.paa and P7.pap. Expressed in the tail and weakly expressed in the vulva and body wall muscles.

It is found in the secreted. The protein localises to the extracellular space. Its subcellular location is the extracellular matrix. In terms of biological role, ligand for members of the frizzled family of seven transmembrane receptors. Required in embryonic development for endoderm specification and the correct positioning and orientation of the mitotic spindles and division planes in blastomere cells. Involved in cleavage axis determination. Binds to receptor tyrosine kinase cam-1. Together with wnt ligand lin-44, plays a role in controlling vulva precursor cell P7.p lineage orientation during vulva development, probably by acting as a ligand for tyrosine kinase receptor lin-18. May act redundantly with other Wnt ligands such as cwn-1 and cwn-2 to control seam cell polarity. The chain is Protein mom-2 (mom-2) from Caenorhabditis elegans.